We begin with the raw amino-acid sequence, 193 residues long: Putative anthranilate synthase component II (193 aa).

One can recognise a Glutamine amidotransferase type-1 domain in the interval 2–193 (KLLIINNHDS…WLAIPPTTNP (192 aa)). Residues Cys-78, His-168, and Glu-170 contribute to the active site.

As to quaternary structure, tetramer of two components I and two components II.

The enzyme catalyses chorismate + L-glutamine = anthranilate + pyruvate + L-glutamate + H(+). It participates in amino-acid biosynthesis; L-tryptophan biosynthesis; L-tryptophan from chorismate: step 1/5. The polypeptide is Putative anthranilate synthase component II (Haemophilus influenzae (strain ATCC 51907 / DSM 11121 / KW20 / Rd)).